Reading from the N-terminus, the 431-residue chain is Glutamate-1-semialdehyde 2,1-aminomutase (431 aa).

Lys-269 carries the post-translational modification N6-(pyridoxal phosphate)lysine.

It belongs to the class-III pyridoxal-phosphate-dependent aminotransferase family. HemL subfamily. Homodimer. Pyridoxal 5'-phosphate serves as cofactor.

It is found in the cytoplasm. The catalysed reaction is (S)-4-amino-5-oxopentanoate = 5-aminolevulinate. Its pathway is porphyrin-containing compound metabolism; protoporphyrin-IX biosynthesis; 5-aminolevulinate from L-glutamyl-tRNA(Glu): step 2/2. The protein is Glutamate-1-semialdehyde 2,1-aminomutase of Francisella tularensis subsp. tularensis (strain SCHU S4 / Schu 4).